The following is a 270-amino-acid chain: S-adenosylmethionine decarboxylase proenzyme (270 aa).

Ser-117 serves as the catalytic Schiff-base intermediate with substrate; via pyruvic acid. Ser-117 is modified (pyruvic acid (Ser); by autocatalysis). The active-site Proton acceptor; for processing activity is His-122. Residue Cys-145 is the Proton donor; for catalytic activity of the active site.

It belongs to the prokaryotic AdoMetDC family. Type 2 subfamily. In terms of assembly, heterooctamer of four alpha and four beta chains arranged as a tetramer of alpha/beta heterodimers. Pyruvate is required as a cofactor. Post-translationally, is synthesized initially as an inactive proenzyme. Formation of the active enzyme involves a self-maturation process in which the active site pyruvoyl group is generated from an internal serine residue via an autocatalytic post-translational modification. Two non-identical subunits are generated from the proenzyme in this reaction, and the pyruvate is formed at the N-terminus of the alpha chain, which is derived from the carboxyl end of the proenzyme. The post-translation cleavage follows an unusual pathway, termed non-hydrolytic serinolysis, in which the side chain hydroxyl group of the serine supplies its oxygen atom to form the C-terminus of the beta chain, while the remainder of the serine residue undergoes an oxidative deamination to produce ammonia and the pyruvoyl group blocking the N-terminus of the alpha chain.

The catalysed reaction is S-adenosyl-L-methionine + H(+) = S-adenosyl 3-(methylsulfanyl)propylamine + CO2. It functions in the pathway amine and polyamine biosynthesis; S-adenosylmethioninamine biosynthesis; S-adenosylmethioninamine from S-adenosyl-L-methionine: step 1/1. In terms of biological role, catalyzes the decarboxylation of S-adenosylmethionine to S-adenosylmethioninamine (dcAdoMet), the propylamine donor required for the synthesis of the polyamines spermine and spermidine from the diamine putrescine. The protein is S-adenosylmethionine decarboxylase proenzyme of Pseudoalteromonas translucida (strain TAC 125).